The primary structure comprises 200 residues: Rho GDP-dissociation inhibitor 2 (200 aa).

The segment at 1–39 (MTEKDAQPQLEEADDDLDSKLNYKPPPQKSLKELQEMDK) is disordered. Residue T2 is modified to N-acetylthreonine. Position 20 is an N6-acetyllysine (K20). Y23 is modified (phosphotyrosine). N6-acetyllysine is present on residues K24, K39, K46, K101, and K123. Residues 30–39 (SLKELQEMDK) show a composition bias toward basic and acidic residues. S144 is subject to Phosphoserine. K174 is modified (N6-acetyllysine).

Belongs to the Rho GDI family. In terms of assembly, interacts with RHOA. Interacts with RAC1. Interacts with RAC2. Interacts with CDC42. Preferentially expressed in hematopoietic cells.

Its subcellular location is the cytoplasm. It localises to the cytosol. Regulates the GDP/GTP exchange reaction of the Rho proteins by inhibiting the dissociation of GDP from them, and the subsequent binding of GTP to them. Regulates reorganization of the actin cytoskeleton mediated by Rho family members. The sequence is that of Rho GDP-dissociation inhibitor 2 (Arhgdib) from Mus musculus (Mouse).